The chain runs to 281 residues: Urease accessory protein UreD 2 (281 aa).

It belongs to the UreD family. UreD, UreF and UreG form a complex that acts as a GTP-hydrolysis-dependent molecular chaperone, activating the urease apoprotein by helping to assemble the nickel containing metallocenter of UreC. The UreE protein probably delivers the nickel.

The protein localises to the cytoplasm. Functionally, required for maturation of urease via the functional incorporation of the urease nickel metallocenter. This Pseudomonas syringae pv. tomato (strain ATCC BAA-871 / DC3000) protein is Urease accessory protein UreD 2.